We begin with the raw amino-acid sequence, 335 residues long: tRNA pseudouridine synthase D (335 aa).

Asp-77 serves as the catalytic Nucleophile. A TRUD domain is found at 152-308 (GFPNYFTEQR…AQHLSWSFIP (157 aa)).

Belongs to the pseudouridine synthase TruD family.

The enzyme catalyses uridine(13) in tRNA = pseudouridine(13) in tRNA. Its function is as follows. Responsible for synthesis of pseudouridine from uracil-13 in transfer RNAs. This Histophilus somni (strain 129Pt) (Haemophilus somnus) protein is tRNA pseudouridine synthase D.